The chain runs to 549 residues: Arginine--tRNA ligase (549 aa).

Residues 132-142 (ANPTGPLHIGH) carry the 'HIGH' region motif.

The protein belongs to the class-I aminoacyl-tRNA synthetase family. As to quaternary structure, monomer.

The protein localises to the cytoplasm. It catalyses the reaction tRNA(Arg) + L-arginine + ATP = L-arginyl-tRNA(Arg) + AMP + diphosphate. The polypeptide is Arginine--tRNA ligase (Paenarthrobacter aurescens (strain TC1)).